Here is a 400-residue protein sequence, read N- to C-terminus: 1-deoxy-D-xylulose 5-phosphate reductoisomerase (400 aa).

NADPH contacts are provided by Thr17, Gly18, Ser19, Ile20, and Asn131. A 1-deoxy-D-xylulose 5-phosphate-binding site is contributed by Lys132. An NADPH-binding site is contributed by Glu133. Residue Asp157 participates in Mn(2+) binding. Residues Ser158, Glu159, Ser188, and His211 each coordinate 1-deoxy-D-xylulose 5-phosphate. A Mn(2+)-binding site is contributed by Glu159. Gly217 contacts NADPH. Positions 224, 229, 230, and 233 each coordinate 1-deoxy-D-xylulose 5-phosphate. Position 233 (Glu233) interacts with Mn(2+).

This sequence belongs to the DXR family. Mg(2+) is required as a cofactor. It depends on Mn(2+) as a cofactor.

It catalyses the reaction 2-C-methyl-D-erythritol 4-phosphate + NADP(+) = 1-deoxy-D-xylulose 5-phosphate + NADPH + H(+). It participates in isoprenoid biosynthesis; isopentenyl diphosphate biosynthesis via DXP pathway; isopentenyl diphosphate from 1-deoxy-D-xylulose 5-phosphate: step 1/6. In terms of biological role, catalyzes the NADPH-dependent rearrangement and reduction of 1-deoxy-D-xylulose-5-phosphate (DXP) to 2-C-methyl-D-erythritol 4-phosphate (MEP). The chain is 1-deoxy-D-xylulose 5-phosphate reductoisomerase from Pseudomonas putida (strain ATCC 47054 / DSM 6125 / CFBP 8728 / NCIMB 11950 / KT2440).